Consider the following 220-residue polypeptide: MSDEKNKFTDASFENCDLKNPSDRDALKQAADKFLKAHAAEADADVKGGGEALVDPLAALQDENKELKDQLLRLAADMENLRRRTARDVADAKAYSIANFARDMLSVSDNLNRALDAIPEGAKENDAGLKTLAEGVEMTERAMIAALERHGVQKIHPEGQKFDPHFHQAMFEIPNSDVPDNTVQQVVQAGYIIGERVLRPAIVGVAKGGAKDISVESDSD.

The segment at 1–22 is disordered; sequence MSDEKNKFTDASFENCDLKNPS.

It belongs to the GrpE family. As to quaternary structure, homodimer.

Its subcellular location is the cytoplasm. Functionally, participates actively in the response to hyperosmotic and heat shock by preventing the aggregation of stress-denatured proteins, in association with DnaK and GrpE. It is the nucleotide exchange factor for DnaK and may function as a thermosensor. Unfolded proteins bind initially to DnaJ; upon interaction with the DnaJ-bound protein, DnaK hydrolyzes its bound ATP, resulting in the formation of a stable complex. GrpE releases ADP from DnaK; ATP binding to DnaK triggers the release of the substrate protein, thus completing the reaction cycle. Several rounds of ATP-dependent interactions between DnaJ, DnaK and GrpE are required for fully efficient folding. This is Protein GrpE from Bartonella henselae (strain ATCC 49882 / DSM 28221 / CCUG 30454 / Houston 1) (Rochalimaea henselae).